The primary structure comprises 321 residues: Protein-L-histidine N-pros-methyltransferase (321 aa).

The N-terminal stretch at 1 to 24 (MRLWLCWLGCYTLLLWALRRRMWA) is a signal peptide. N-linked (GlcNAc...) asparagine glycosylation occurs at N89. The S-adenosyl-L-homocysteine site is built by E177, N213, and Y298.

The protein belongs to the METTL9 family.

The protein localises to the endoplasmic reticulum. Its subcellular location is the mitochondrion. The catalysed reaction is L-histidyl-[protein] + S-adenosyl-L-methionine = N(pros)-methyl-L-histidyl-[protein] + S-adenosyl-L-homocysteine + H(+). Protein-histidine N-methyltransferase that specifically catalyzes 1-methylhistidine (pros-methylhistidine) methylation of target proteins. Mediates methylation of proteins with a His-x-His (HxH) motif (where 'x' is preferably a small amino acid); 1-methylhistidine modification may affect the binding of zinc and other metals to its target proteins. In Gallus gallus (Chicken), this protein is Protein-L-histidine N-pros-methyltransferase.